A 220-amino-acid polypeptide reads, in one-letter code: Deoxyribose-phosphate aldolase (220 aa).

Asp-89 (proton donor/acceptor) is an active-site residue. Residue Lys-151 is the Schiff-base intermediate with acetaldehyde of the active site. The Proton donor/acceptor role is filled by Lys-180.

This sequence belongs to the DeoC/FbaB aldolase family. DeoC type 1 subfamily.

The protein localises to the cytoplasm. It carries out the reaction 2-deoxy-D-ribose 5-phosphate = D-glyceraldehyde 3-phosphate + acetaldehyde. It functions in the pathway carbohydrate degradation; 2-deoxy-D-ribose 1-phosphate degradation; D-glyceraldehyde 3-phosphate and acetaldehyde from 2-deoxy-alpha-D-ribose 1-phosphate: step 2/2. In terms of biological role, catalyzes a reversible aldol reaction between acetaldehyde and D-glyceraldehyde 3-phosphate to generate 2-deoxy-D-ribose 5-phosphate. In Streptococcus pneumoniae serotype 2 (strain D39 / NCTC 7466), this protein is Deoxyribose-phosphate aldolase.